The following is a 384-amino-acid chain: Mitogen-activated protein kinase homolog 1 (384 aa).

One can recognise a Protein kinase domain in the interval 32-319 (YVPIKPIGRG…VMEALQHPYM (288 aa)). Residues 38–46 (IGRGAYGIV) and Lys61 contribute to the ATP site. The active-site Proton acceptor is the Asp158. A Phosphothreonine modification is found at Thr191. Residues 191–193 (TEY) carry the TXY motif. Phosphotyrosine is present on Tyr193.

Belongs to the protein kinase superfamily. CMGC Ser/Thr protein kinase family. MAP kinase subfamily. Requires Mg(2+) as cofactor. Post-translationally, dually phosphorylated on Thr-191 and Tyr-193, which activates the enzyme. Expressed in vegetative organs such as leaf, root, or stem. In the reproductive organs, it is found in the ovary, but not in the stamen.

The catalysed reaction is L-seryl-[protein] + ATP = O-phospho-L-seryl-[protein] + ADP + H(+). The enzyme catalyses L-threonyl-[protein] + ATP = O-phospho-L-threonyl-[protein] + ADP + H(+). Activated by tyrosine and threonine phosphorylation. The protein is Mitogen-activated protein kinase homolog 1 (MPK1) of Petunia hybrida (Petunia).